The primary structure comprises 1117 residues: Sodium-driven chloride bicarbonate exchanger (1117 aa).

2 disordered regions span residues 1-23 (MEIK…EEAV) and 58-97 (GRKS…TPSQ). Over 1–508 (MEIKDQGAQM…DFRDAFSLQC (508 aa)) the chain is Cytoplasmic. The segment covering 59–76 (RKSHRRHRHRGHKHRKRD) has biased composition (basic residues). The residue at position 89 (serine 89) is a Phosphoserine. Threonine 94 carries the post-translational modification Phosphothreonine. A Phosphoserine modification is found at serine 275. Disordered regions lie at residues 282-309 (DFSK…KGPP) and 431-476 (WDPS…PELQ). Residues 509–529 (LASFLFLYCACMSPVITFGGL) traverse the membrane as a helical segment. At 530–537 (LGEATEGR) the chain is on the extracellular side. Residues 538-558 (ISAIESLFGASMTGIAYSLFG) traverse the membrane as a helical segment. Over 559 to 561 (GQP) the chain is Cytoplasmic. A helical transmembrane segment spans residues 562 to 582 (LTILGSTGPVLVFEKILFKFC). The Extracellular portion of the chain corresponds to 583-595 (KEYGLSYLSLRAS). The helical transmembrane segment at 596 to 616 (IGLWTATLCIILVATDASSLV) threads the bilayer. The Cytoplasmic portion of the chain corresponds to 617–625 (CYITRFTEE). A helical membrane pass occupies residues 626–646 (AFASLICIIFIYEALEKLFEL). The Extracellular segment spans residues 647 to 719 (SESYPINMHN…VGRACGHGHP (73 aa)). N-linked (GlcNAc...) asparagine glycosylation is found at asparagine 676, asparagine 686, and asparagine 696. The helical transmembrane segment at 720–740 (YVPDVLFWSVILFFSTVTMSA) threads the bilayer. At 741 to 761 (TLKQFKTSRYFPTKVRSIVSD) the chain is on the cytoplasmic side. Residues 762–782 (FAVFLTILCMVLIDYAIGIPS) form a helical membrane-spanning segment. Residues 783–808 (PKLQVPSVFKPTRDDRGWFVTPLGPN) are Extracellular-facing. The helical transmembrane segment at 809 to 829 (PWWTIIAAIIPALLCTILIFM) threads the bilayer. Residues 830–854 (DQQITAVIINRKEHKLKKGCGYHLD) lie on the Cytoplasmic side of the membrane. Residues 855–875 (LLMVAVMLGVCSIMGLPWFVA) form a helical membrane-spanning segment. Over 876 to 911 (ATVLSITHVNSLKLESECSAPGEQPKFLGIREQRVT) the chain is Extracellular. Residues 912-932 (GLMIFILMGSSVFMTSILKFI) form a helical membrane-spanning segment. Residues 933 to 934 (PM) are Cytoplasmic-facing. Residues 935 to 955 (PVLYGVFLYMGASSLKGIQLF) traverse the membrane as a helical segment. Topologically, residues 956-997 (DRIKLFWMPAKHQPDFIYLRHVPLRKVHLFTVIQMSCLGLLW) are extracellular. Residues 998–1018 (IIKVSRAAIVFPMMVLALVFV) form a helical membrane-spanning segment. Over 1019 to 1117 (RKLMDFLFTK…SRFPSKSSPS (99 aa)) the chain is Cytoplasmic. Serine 1056 and serine 1084 each carry phosphoserine.

The protein belongs to the anion exchanger (TC 2.A.31) family. In terms of processing, N-glycosylated. As to expression, in the brain, detected in cerebral cortex, subcortex, cerebellum, hippocampus and medulla (at protein level). Expressed in neurons but not in astrocytes (at protein level). Isoforms starting with Met-Glu-Ile-Lys are found predominantly in the brain with lower levels in the eye while isoforms starting with Met-Cys-Asp-Leu are most abundant in the kidney with lower levels in the duodenum, jejunum and ileum (at protein level). In the kidney, isoforms starting with Met-Cys-Asp-Leu are primarily expressed in the cortex, the outer stripe of the outer medulla and the inner stripe of the outer medulla (ISOM) but are not detectable in the inner medulla (IM) while isoforms starting with Met-Glu-Ile-Lys are predominantly expressed in the ISOM and IM. Expressed in the brain, in the hippocampus as well as in dentate gyrus, cortical layers, cerebellum, olfactory bulb and in the epithelial cells of the choroid plexus. Detected in pituitary, testis, kidney and ileum. Detected also in spleen and lung. Mainly expressed in the jejenum (at protein level).

It localises to the basolateral cell membrane. The protein localises to the apical cell membrane. Its subcellular location is the cell projection. The protein resides in the dendrite. It is found in the axon. It localises to the perikaryon. The protein localises to the presynapse. Its subcellular location is the postsynapse. It catalyses the reaction 2 hydrogencarbonate(out) + chloride(in) + Na(+)(out) = 2 hydrogencarbonate(in) + chloride(out) + Na(+)(in). Sodium/bicarbonate cotransporter which plays an important role in regulating intracellular pH. Has been shown to act as a sodium/bicarbonate cotransporter in exchange for intracellular chloride. Has also been shown to act as a sodium/biocarbonate cotransporter which does not couple net influx of bicarbonate to net efflux of chloride, with the observed chloride efflux being due to chloride self-exchange. Controls neuronal pH and may contribute to the secretion of cerebrospinal fluid. Acting on presynaptic intracellular pH, it promotes GABA release, reduces the excitability of CA1 pyramidal neurons, and modulates short-term synaptic plasticity. Required in retinal cells to maintain normal pH which is necessary for normal vision. In the kidney, likely to mediate bicarbonate reclamation in the apical membrane of the proximal tubules. Functionally, sodium/bicarbonate cotransporter which mediates cotransport of sodium and bicarbonate in association with an efflux of intracellular chloride and is involved in NaCl absorption in the small intestine. The chain is Sodium-driven chloride bicarbonate exchanger from Rattus norvegicus (Rat).